Reading from the N-terminus, the 439-residue chain is Exosome complex component RRP45 (439 aa).

The interval 1–268 (MKETPLSNCE…AEITELILKA (268 aa)) is ARE binding. A Phosphoserine modification is found at Ser-65. N6-acetyllysine; alternate is present on Lys-297. Residue Lys-297 forms a Glycyl lysine isopeptide (Lys-Gly) (interchain with G-Cter in SUMO1); alternate linkage. Residue Lys-297 forms a Glycyl lysine isopeptide (Lys-Gly) (interchain with G-Cter in SUMO2); alternate linkage. Phosphoserine is present on residues Ser-306, Val-325, Ser-327, and Ser-346. Disordered regions lie at residues 335–363 (GTAQ…GGGD) and 391–439 (LSDS…RAAN). The span at 349–361 (DLEDSEKEDDEGG) shows a compositional bias: acidic residues. Residues Ser-392, Ser-394, Lys-409, and Ile-411 each carry the phosphoserine modification. Lys-419 participates in a covalent cross-link: Glycyl lysine isopeptide (Lys-Gly) (interchain with G-Cter in SUMO2). Basic residues predominate over residues 425–439 (SKKPVKRRKKKRAAN).

Belongs to the RNase PH family. As to quaternary structure, component of the RNA exosome core complex (Exo-9), composed of EXOSC1, EXOSC2, EXOSC3, EXOSC4, EXOSC5, EXOSC6, EXOSC7, EXOSC8 and EXOSC9; within the complex interacts with EXOSC3, EXOSC4, EXOSC5 and DIS3. The catalytically inactive RNA exosome core complex (Exo-9) associates with the catalytic subunit EXOSC10/RRP6. Exo-9 may associate with DIS3 to form the nucleolar exosome complex, or DIS3L to form the cytoplasmic exosome complex. Exo-9 is formed by a hexameric base ring consisting of the heterodimers EXOSC4-EXOSC9, EXOSC5-EXOSC8 and EXOSC6-EXOSC7, and a cap ring consisting of EXOSC1, EXOSC2 and EXOSC3. The RNA exosome complex associates with cofactors C1D/RRP47, MPHOSPH6/MPP6 and MTREX/MTR4. Interacts (via C-terminus region) with SETX (via N-terminus domain); the interaction enhances SETX sumoylation. Interacts with DIS3; the interaction is direct.

It is found in the cytoplasm. It localises to the nucleus. The protein resides in the nucleolus. Its subcellular location is the nucleoplasm. Non-catalytic component of the RNA exosome complex which has 3'-&gt;5' exoribonuclease activity and participates in a multitude of cellular RNA processing and degradation events. In the nucleus, the RNA exosome complex is involved in proper maturation of stable RNA species such as rRNA, snRNA and snoRNA, in the elimination of RNA processing by-products and non-coding 'pervasive' transcripts, such as antisense RNA species and promoter-upstream transcripts (PROMPTs), and of mRNAs with processing defects, thereby limiting or excluding their export to the cytoplasm. The RNA exosome may be involved in Ig class switch recombination (CSR) and/or Ig variable region somatic hypermutation (SHM) by targeting AICDA deamination activity to transcribed dsDNA substrates. In the cytoplasm, the RNA exosome complex is involved in general mRNA turnover and specifically degrades inherently unstable mRNAs containing AU-rich elements (AREs) within their 3' untranslated regions, and in RNA surveillance pathways, preventing translation of aberrant mRNAs. It seems to be involved in degradation of histone mRNA. The catalytic inactive RNA exosome core complex of 9 subunits (Exo-9) is proposed to play a pivotal role in the binding and presentation of RNA for ribonucleolysis, and to serve as a scaffold for the association with catalytic subunits and accessory proteins or complexes. EXOSC9 binds to ARE-containing RNAs. The polypeptide is Exosome complex component RRP45 (EXOSC9) (Homo sapiens (Human)).